A 384-amino-acid chain; its full sequence is 4-hydroxy-3-methylbut-2-en-1-yl diphosphate synthase (flavodoxin) 1 (384 aa).

4 residues coordinate [4Fe-4S] cluster: Cys281, Cys284, Cys316, and Glu323.

This sequence belongs to the IspG family. It depends on [4Fe-4S] cluster as a cofactor.

It catalyses the reaction (2E)-4-hydroxy-3-methylbut-2-enyl diphosphate + oxidized [flavodoxin] + H2O + 2 H(+) = 2-C-methyl-D-erythritol 2,4-cyclic diphosphate + reduced [flavodoxin]. Its pathway is isoprenoid biosynthesis; isopentenyl diphosphate biosynthesis via DXP pathway; isopentenyl diphosphate from 1-deoxy-D-xylulose 5-phosphate: step 5/6. Functionally, converts 2C-methyl-D-erythritol 2,4-cyclodiphosphate (ME-2,4cPP) into 1-hydroxy-2-methyl-2-(E)-butenyl 4-diphosphate. The protein is 4-hydroxy-3-methylbut-2-en-1-yl diphosphate synthase (flavodoxin) 1 of Streptomyces coelicolor (strain ATCC BAA-471 / A3(2) / M145).